The primary structure comprises 190 residues: dCTP deaminase, dUMP-forming (190 aa).

DCTP contacts are provided by residues 101 to 106 (KSSLGR), Asp119, 127 to 129 (TLE), Gln148, Tyr162, and Gln174. Catalysis depends on Glu129, which acts as the Proton donor/acceptor. Residues 163–190 (GSSQVGSKYQGQRGPTPSKSYQNFVKSN) form a disordered region.

The protein belongs to the dCTP deaminase family. As to quaternary structure, homotrimer.

It catalyses the reaction dCTP + 2 H2O = dUMP + NH4(+) + diphosphate. It functions in the pathway pyrimidine metabolism; dUMP biosynthesis; dUMP from dCTP: step 1/1. Bifunctional enzyme that catalyzes both the deamination of dCTP to dUTP and the hydrolysis of dUTP to dUMP without releasing the toxic dUTP intermediate. This Mycolicibacterium gilvum (strain PYR-GCK) (Mycobacterium gilvum (strain PYR-GCK)) protein is dCTP deaminase, dUMP-forming.